A 33-amino-acid chain; its full sequence is Brevinin-2DYc (33 aa).

A disulfide bridge links cysteine 27 with cysteine 33.

As to expression, expressed by the skin glands.

It is found in the secreted. In terms of biological role, antimicrobial peptide. A mixture of Brevinin-2DYc/2DYd is active against the Gram-positive bacterium S.aureus (MIC=15 uM) and the Gram-negative bacterium E.coli (MIC=15 uM). This Rana dybowskii (Dybovsky's frog) protein is Brevinin-2DYc.